Reading from the N-terminus, the 417-residue chain is Serine--tRNA ligase (417 aa).

L-serine is bound at residue 226-228 (TSE). ATP is bound by residues 257–259 (RRE) and valine 273. Position 280 (glutamate 280) interacts with L-serine. ATP is bound at residue 344–347 (ELTS). Threonine 379 lines the L-serine pocket.

It belongs to the class-II aminoacyl-tRNA synthetase family. Type-1 seryl-tRNA synthetase subfamily. As to quaternary structure, homodimer. The tRNA molecule binds across the dimer.

The protein resides in the cytoplasm. It carries out the reaction tRNA(Ser) + L-serine + ATP = L-seryl-tRNA(Ser) + AMP + diphosphate + H(+). It catalyses the reaction tRNA(Sec) + L-serine + ATP = L-seryl-tRNA(Sec) + AMP + diphosphate + H(+). The protein operates within aminoacyl-tRNA biosynthesis; selenocysteinyl-tRNA(Sec) biosynthesis; L-seryl-tRNA(Sec) from L-serine and tRNA(Sec): step 1/1. Functionally, catalyzes the attachment of serine to tRNA(Ser). Is also able to aminoacylate tRNA(Sec) with serine, to form the misacylated tRNA L-seryl-tRNA(Sec), which will be further converted into selenocysteinyl-tRNA(Sec). The chain is Serine--tRNA ligase from Mycobacterium sp. (strain JLS).